The sequence spans 295 residues: MMMEEKLVINELELGKELANRLMNNLKHTSSVDSNKTLISDILRIYQNAIFMLSFNQDKNILKRSLEIDGKDSKNVFKKRKVSEKNTEKVKVFVATEQENGSIDDGHCWRKYGQKEIHGSKNPRAYYRCTHRFTQDCLAVKQVQKSDTDPSLFEVKYLGNHTCNNITSPKTTTNFSVSLTNTNIFEGNRVHVTEQSEDMKPTKSEEVMISLEDLENKKNIFRTFSFSNHEIENGVWKSNLFLGNFVEDLSPATSGSAITSEVLSAPAAVENSETADSYFSSLDNIIDFGQDWLWS.

Positions 98–166 (QENGSIDDGH…YLGNHTCNNI (69 aa)) form a DNA-binding region, WRKY.

The protein belongs to the WRKY group III family. Binds to BZR2/BES1 to cooperatively regulate the expression of target genes. In terms of processing, phosphorylated and destabilized by ASK7/BIN2. As to expression, expressed in guard cells, hypocotyls, and in the vascular tissues of cotyledon and root. Mostly expressed in roots, at lower levels in leaves and petioles, and, to a lower extent, in stems, flowers and siliques.

It localises to the nucleus. In terms of biological role, transcription factor involved in the regulation of osmotic stress responses and stomatal movement. Interacts specifically with the W box (5'-(T)TGAC[CT]-3'), a frequently occurring elicitor-responsive cis-acting element. Positive regulator of EDS1-dependent defense against E.amylovora. Together with WRKY70 and WRKY53, promotes resistance to P.syringae, probably by enhancing salicylic acid (SA)- dependent genes. Contributes to the suppression of jasmonic acid (MeJA)-induced expression of PDF1.2. Together with WRKY54 and WRKY70, promotes brassinosteroid (BR)-regulated plant growth but prevent drought response by modulating gene expression. This is Probable WRKY transcription factor 46 (WRKY46) from Arabidopsis thaliana (Mouse-ear cress).